We begin with the raw amino-acid sequence, 332 residues long: 2,3-diketo-L-gulonate reductase (332 aa).

Catalysis depends on His44, which acts as the Proton donor. Residues 168–174, 224–225, and 304–306 contribute to the NAD(+) site; these read ITMVDMS, WK, and GHE.

It belongs to the LDH2/MDH2 oxidoreductase family. DlgD subfamily. As to quaternary structure, homodimer.

The protein localises to the cytoplasm. It carries out the reaction 3-dehydro-L-gulonate + NAD(+) = 2,3-dioxo-L-gulonate + NADH + H(+). The catalysed reaction is 3-dehydro-L-gulonate + NADP(+) = 2,3-dioxo-L-gulonate + NADPH + H(+). In terms of biological role, catalyzes the reduction of 2,3-diketo-L-gulonate in the presence of NADH, to form 3-keto-L-gulonate. The sequence is that of 2,3-diketo-L-gulonate reductase from Escherichia coli O6:K15:H31 (strain 536 / UPEC).